The sequence spans 1279 residues: ATP-dependent helicase/nuclease subunit A (1279 aa).

A UvrD-like helicase ATP-binding domain is found at 4–499; sequence TKWTDEQRQA…VKLFKNFRSR (496 aa). 25–32 lines the ATP pocket; sequence AGAGAGKT. A UvrD-like helicase C-terminal domain is found at 526–853; it reads EEALKVGASY…RIMSIHKSKG (328 aa).

Belongs to the helicase family. AddA subfamily. Heterodimer of AddA and AddB/RexB. The cofactor is Mg(2+).

It catalyses the reaction Couples ATP hydrolysis with the unwinding of duplex DNA by translocating in the 3'-5' direction.. The catalysed reaction is ATP + H2O = ADP + phosphate + H(+). The heterodimer acts as both an ATP-dependent DNA helicase and an ATP-dependent, dual-direction single-stranded exonuclease. Recognizes the chi site generating a DNA molecule suitable for the initiation of homologous recombination. The AddA nuclease domain is required for chi fragment generation; this subunit has the helicase and 3' -&gt; 5' nuclease activities. This is ATP-dependent helicase/nuclease subunit A from Clostridium botulinum (strain ATCC 19397 / Type A).